Here is a 777-residue protein sequence, read N- to C-terminus: Rho guanine nucleotide exchange factor 38 (777 aa).

Thr34 bears the Phosphothreonine mark. The segment at 35–72 (DTVVESSVSGDHSGTLRRSQSDRTEYNQKLQEKMTPQG) is disordered. A compositionally biased stretch (polar residues) spans 37-52 (VVESSVSGDHSGTLRR). Positions 53–66 (SQSDRTEYNQKLQE) are enriched in basic and acidic residues. The DH domain maps to 94–285 (KREKIIKELI…KDINVNINEL (192 aa)). In terms of domain architecture, BAR spans 327-536 (LKILTRGESQ…QNQVLEEIQN (210 aa)). The SH3 1 domain maps to 582–645 (SAEELYQAKR…YSSFLKPYNP (64 aa)). Positions 673-694 (PASDSVTGTSESSIGDSSSSLS) are disordered. Positions 679-694 (TGTSESSIGDSSSSLS) are enriched in low complexity. The 64-residue stretch at 713–776 (VDEQIFYAVH…PANYLGKMTY (64 aa)) folds into the SH3 2 domain.

In terms of biological role, may act as a guanine-nucleotide releasing factor. The chain is Rho guanine nucleotide exchange factor 38 (ARHGEF38) from Homo sapiens (Human).